The chain runs to 321 residues: Thioredoxin reductase (321 aa).

FAD-binding positions include 11–14 (SGPA), 40–41 (TA), glutamine 45, asparagine 54, cysteine 145, aspartate 288, and 295–297 (RQA). A disulfide bridge links cysteine 142 with cysteine 145.

It belongs to the class-II pyridine nucleotide-disulfide oxidoreductase family. In terms of assembly, homodimer. FAD serves as cofactor.

The protein localises to the cytoplasm. It carries out the reaction [thioredoxin]-dithiol + NADP(+) = [thioredoxin]-disulfide + NADPH + H(+). The protein is Thioredoxin reductase (TRR1) of Debaryomyces hansenii (strain ATCC 36239 / CBS 767 / BCRC 21394 / JCM 1990 / NBRC 0083 / IGC 2968) (Yeast).